A 1483-amino-acid chain; its full sequence is Dynein axonemal assembly factor 1 homolog (1483 aa).

6 LRR repeats span residues 34–56, 57–78, 79–100, 101–122, 125–146, and 150–171; these read RLNDVLYLHYQGFQCIESLEEYT, ELKCLWLECNAISEIQGLEKLS, KLKCLFLQNNLITKIENLDPCR, ELDTLNLSSNHIRKIQNIGTNV, VLNTLTISSNYLKDSESLSDLI, and TLSVLDLSNNRIDDILIVKIFE. The region spanning 185 to 223 is the LRRCT domain; the sequence is PVVSRLPQYRKTLILACKELTYLDSRPVFPRDRACAEAW. Disordered regions lie at residues 249–282, 300–327, 945–986, and 1167–1213; these read SINCTIRMRNSHRPPDQQDPLLRSSDSEDDTCAE, EEVSGEQPISEDGTNSSSSLEDNDGTSS, DSGD…HGTK, and SENE…SIDD. Positions 311–327 are enriched in polar residues; the sequence is DGTNSSSSLEDNDGTSS. A compositionally biased stretch (basic and acidic residues) spans 1183 to 1196; that stretch reads TNDKESSDIMEKNG.

Belongs to the DNAAF1 family.

The protein resides in the cell projection. Its subcellular location is the cilium. In terms of biological role, cilium-specific protein required for cilia structures. This chain is Dynein axonemal assembly factor 1 homolog (dtr), found in Drosophila melanogaster (Fruit fly).